We begin with the raw amino-acid sequence, 82 residues long: Small ribosomal subunit protein bS16 (82 aa).

It belongs to the bacterial ribosomal protein bS16 family.

The protein is Small ribosomal subunit protein bS16 of Marinomonas sp. (strain MWYL1).